Consider the following 378-residue polypeptide: Tetraacyldisaccharide 4'-kinase (378 aa).

Residue 63–70 (AVGGAGKT) participates in ATP binding.

The protein belongs to the LpxK family.

It carries out the reaction a lipid A disaccharide + ATP = a lipid IVA + ADP + H(+). Its pathway is glycolipid biosynthesis; lipid IV(A) biosynthesis; lipid IV(A) from (3R)-3-hydroxytetradecanoyl-[acyl-carrier-protein] and UDP-N-acetyl-alpha-D-glucosamine: step 6/6. Functionally, transfers the gamma-phosphate of ATP to the 4'-position of a tetraacyldisaccharide 1-phosphate intermediate (termed DS-1-P) to form tetraacyldisaccharide 1,4'-bis-phosphate (lipid IVA). This is Tetraacyldisaccharide 4'-kinase from Anaeromyxobacter sp. (strain K).